A 121-amino-acid chain; its full sequence is Small ribosomal subunit protein uS13 (121 aa).

The tract at residues 94-121 is disordered; sequence GLPVRGQNTKNNSRTRKGPRRTVANKKK. The segment covering 106–121 has biased composition (basic residues); sequence SRTRKGPRRTVANKKK.

The protein belongs to the universal ribosomal protein uS13 family. Part of the 30S ribosomal subunit. Forms a loose heterodimer with protein S19. Forms two bridges to the 50S subunit in the 70S ribosome.

Its function is as follows. Located at the top of the head of the 30S subunit, it contacts several helices of the 16S rRNA. In the 70S ribosome it contacts the 23S rRNA (bridge B1a) and protein L5 of the 50S subunit (bridge B1b), connecting the 2 subunits; these bridges are implicated in subunit movement. Contacts the tRNAs in the A and P-sites. This Exiguobacterium sibiricum (strain DSM 17290 / CCUG 55495 / CIP 109462 / JCM 13490 / 255-15) protein is Small ribosomal subunit protein uS13.